We begin with the raw amino-acid sequence, 281 residues long: 4-diphosphocytidyl-2-C-methyl-D-erythritol kinase (281 aa).

K15 is a catalytic residue. ATP is bound at residue 98-108; it reads PTGAGLGGGSS. Residue D140 is part of the active site.

The protein belongs to the GHMP kinase family. IspE subfamily.

It carries out the reaction 4-CDP-2-C-methyl-D-erythritol + ATP = 4-CDP-2-C-methyl-D-erythritol 2-phosphate + ADP + H(+). It participates in isoprenoid biosynthesis; isopentenyl diphosphate biosynthesis via DXP pathway; isopentenyl diphosphate from 1-deoxy-D-xylulose 5-phosphate: step 3/6. Its function is as follows. Catalyzes the phosphorylation of the position 2 hydroxy group of 4-diphosphocytidyl-2C-methyl-D-erythritol. The sequence is that of 4-diphosphocytidyl-2-C-methyl-D-erythritol kinase from Neisseria gonorrhoeae (strain ATCC 700825 / FA 1090).